A 326-amino-acid polypeptide reads, in one-letter code: MLTLARQQQRQNIRWLLCLSVLMLLALLLSLCAGEQWISPGDWFTPRGELFVWQIRLPRTLAVLLVGAALAISGAVMQALFENPLAEPGLLGVSNGAGVGLIAAVLLGQGQLPNWALGLCAIAGALIITLILLRFARRHLSTSRLLLAGVALGIICSALMTWAIYFSTSVDLRQLMYWMMGGFGGVDWRQSWLMLALIPVLLWICCQSRPMNMLALGEISARQLGLPLWFWRNVLVAATGWMVGVSVALAGAIGFIGLVIPHILRLCGLTDHRVLLPGCALAGASALLLADVVARLALAAAELPIGVVTATLGAPVFIWLLLKAGR.

A run of 9 helical transmembrane segments spans residues 15–35 (WLLCLSVLMLLALLLSLCAGE), 61–81 (LAVLLVGAALAISGAVMQALF), 88–108 (PGLLGVSNGAGVGLIAAVLLG), 112–132 (LPNWALGLCAIAGALIITLIL), 146–166 (LLAGVALGIICSALMTWAIYF), 184–204 (GGVDWRQSWLMLALIPVLLWI), 240–260 (GWMVGVSVALAGAIGFIGLVI), 274–294 (VLLPGCALAGASALLLADVVA), and 302–322 (ELPIGVVTATLGAPVFIWLLL).

This sequence belongs to the binding-protein-dependent transport system permease family. FecCD subfamily. The complex is composed of two ATP-binding proteins (BtuD), two transmembrane proteins (BtuC) and a solute-binding protein (BtuF).

The protein localises to the cell inner membrane. In terms of biological role, part of the ABC transporter complex BtuCDF involved in vitamin B12 import. Involved in the translocation of the substrate across the membrane. This is Vitamin B12 import system permease protein BtuC from Escherichia coli (strain SE11).